The sequence spans 259 residues: Dihydroorotate dehydrogenase B (NAD(+)), electron transfer subunit (259 aa).

The region spanning 2 to 102 (MQKQNMIVVN…LGPLGHGFPV (101 aa)) is the FAD-binding FR-type domain. FAD contacts are provided by residues 53–56 (RPIS), 70–72 (LYR), and 77–78 (GT). [2Fe-2S] cluster-binding residues include C221, C226, C229, and C246.

This sequence belongs to the PyrK family. Heterotetramer of 2 PyrK and 2 PyrD type B subunits. [2Fe-2S] cluster serves as cofactor. The cofactor is FAD.

The protein operates within pyrimidine metabolism; UMP biosynthesis via de novo pathway; orotate from (S)-dihydroorotate (NAD(+) route): step 1/1. Responsible for channeling the electrons from the oxidation of dihydroorotate from the FMN redox center in the PyrD type B subunit to the ultimate electron acceptor NAD(+). The chain is Dihydroorotate dehydrogenase B (NAD(+)), electron transfer subunit from Bacillus cereus (strain ZK / E33L).